A 99-amino-acid polypeptide reads, in one-letter code: Sec-independent protein translocase protein TatA (99 aa).

A helical membrane pass occupies residues 1-21 (MIGNLKPLEIVLIIAVILLLF). A disordered region spans residues 46–99 (AMKKDDAATAAPTTETVADDTVPPQSTTARTIQAAPGDVTSSRPVSEAKPTTQS). Low complexity predominate over residues 53–69 (ATAAPTTETVADDTVPP). Polar residues predominate over residues 84 to 99 (VTSSRPVSEAKPTTQS).

This sequence belongs to the TatA/E family. As to quaternary structure, the Tat system comprises two distinct complexes: a TatABC complex, containing multiple copies of TatA, TatB and TatC subunits, and a separate TatA complex, containing only TatA subunits. Substrates initially bind to the TatABC complex, which probably triggers association of the separate TatA complex to form the active translocon.

The protein resides in the cell membrane. Its function is as follows. Part of the twin-arginine translocation (Tat) system that transports large folded proteins containing a characteristic twin-arginine motif in their signal peptide across membranes. TatA could form the protein-conducting channel of the Tat system. The polypeptide is Sec-independent protein translocase protein TatA (Streptomyces griseus subsp. griseus (strain JCM 4626 / CBS 651.72 / NBRC 13350 / KCC S-0626 / ISP 5235)).